We begin with the raw amino-acid sequence, 182 residues long: Ribosome-recycling factor (182 aa).

It belongs to the RRF family.

The protein resides in the cytoplasm. Functionally, responsible for the release of ribosomes from messenger RNA at the termination of protein biosynthesis. May increase the efficiency of translation by recycling ribosomes from one round of translation to another. The chain is Ribosome-recycling factor from Nostoc sp. (strain PCC 7120 / SAG 25.82 / UTEX 2576).